A 494-amino-acid chain; its full sequence is UPF0371 protein SPy_1343/M5005_Spy1095 (494 aa).

This sequence belongs to the UPF0371 family.

The chain is UPF0371 protein SPy_1343/M5005_Spy1095 from Streptococcus pyogenes serotype M1.